The sequence spans 250 residues: Glycerol-1-phosphate phosphohydrolase 2 (250 aa).

Residue aspartate 18 is the Nucleophile of the active site. Aspartate 18 and aspartate 20 together coordinate Mg(2+). Aspartate 20 functions as the Proton donor in the catalytic mechanism. A Glycyl lysine isopeptide (Lys-Gly) (interchain with G-Cter in ubiquitin) cross-link involves residue lysine 64. Position 90 is a phosphoserine (serine 90). Residue lysine 144 forms a Glycyl lysine isopeptide (Lys-Gly) (interchain with G-Cter in ubiquitin) linkage. A Mg(2+)-binding site is contributed by aspartate 179.

This sequence belongs to the HAD-like hydrolase superfamily. DOG/GPP family. In terms of assembly, monomer. Requires Mg(2+) as cofactor.

Its subcellular location is the cytoplasm. The protein localises to the nucleus. It carries out the reaction sn-glycerol 1-phosphate + H2O = glycerol + phosphate. The enzyme catalyses sn-glycerol 3-phosphate + H2O = glycerol + phosphate. Its function is as follows. Glycerol-1-phosphate phosphohydrolase involved in glycerol biosynthesis. Plays a role in osmoadaptation. The chain is Glycerol-1-phosphate phosphohydrolase 2 from Saccharomyces cerevisiae (strain ATCC 204508 / S288c) (Baker's yeast).